The primary structure comprises 381 residues: Chaperone protein DnaJ (381 aa).

The 66-residue stretch at 5-70 (DYYEVLGIER…EKRSAYDQFG (66 aa)) folds into the J domain. The CR-type zinc finger occupies 137–215 (GTTVDIRVPR…CHGEGRVRET (79 aa)). Zn(2+) contacts are provided by Cys150, Cys153, Cys167, Cys170, Cys189, Cys192, Cys203, and Cys206. 4 CXXCXGXG motif repeats span residues 150 to 157 (CEHCDGDG), 167 to 174 (CPTCHGQG), 189 to 196 (CPTCHGAG), and 203 to 210 (CRKCHGEG).

It belongs to the DnaJ family. As to quaternary structure, homodimer. Zn(2+) serves as cofactor.

The protein localises to the cytoplasm. Participates actively in the response to hyperosmotic and heat shock by preventing the aggregation of stress-denatured proteins and by disaggregating proteins, also in an autonomous, DnaK-independent fashion. Unfolded proteins bind initially to DnaJ; upon interaction with the DnaJ-bound protein, DnaK hydrolyzes its bound ATP, resulting in the formation of a stable complex. GrpE releases ADP from DnaK; ATP binding to DnaK triggers the release of the substrate protein, thus completing the reaction cycle. Several rounds of ATP-dependent interactions between DnaJ, DnaK and GrpE are required for fully efficient folding. Also involved, together with DnaK and GrpE, in the DNA replication of plasmids through activation of initiation proteins. This chain is Chaperone protein DnaJ, found in Chromohalobacter salexigens (strain ATCC BAA-138 / DSM 3043 / CIP 106854 / NCIMB 13768 / 1H11).